We begin with the raw amino-acid sequence, 433 residues long: Probable beta-1,3-galactosyl-O-glycosyl-glycoprotein beta-1,6-N-acetylglucosaminyltransferase 7 (433 aa).

Topologically, residues 1–8 (MSQLRTTK) are cytoplasmic. A helical; Signal-anchor for type II membrane protein transmembrane segment spans residues 9–25 (AGLVACGMICAFIFLYL). Residues 26–433 (RNPGPEEAEA…QSHFNSQPHH (408 aa)) lie on the Extracellular side of the membrane. 4 cysteine pairs are disulfide-bonded: cysteine 57–cysteine 209, cysteine 143–cysteine 358, cysteine 164–cysteine 191, and cysteine 367–cysteine 398. Asparagine 112 carries N-linked (GlcNAc...) asparagine glycosylation. Positions 233 to 275 (NITPGVTPPANSKPKTGQGPPKPSPDENSYTAPNTIFKQSPPH) are disordered. Polar residues predominate over residues 258–275 (DENSYTAPNTIFKQSPPH). The interval 413–433 (VPPEPHWQFPQQSHFNSQPHH) is disordered. The span at 421 to 433 (FPQQSHFNSQPHH) shows a compositional bias: polar residues.

This sequence belongs to the glycosyltransferase 14 family.

It localises to the golgi apparatus membrane. It functions in the pathway protein modification; protein glycosylation. Its function is as follows. Probable glycosyltransferase. The protein is Probable beta-1,3-galactosyl-O-glycosyl-glycoprotein beta-1,6-N-acetylglucosaminyltransferase 7 of Mus musculus (Mouse).